The sequence spans 296 residues: GTPase Era (296 aa).

Residues K3 to E170 form the Era-type G domain. The G1 stretch occupies residues G11–S18. G11 to S18 is a binding site for GTP. The segment at Q37–N41 is G2. Residues D58–G61 form a G3 region. Residues D58–I62 and N120–D123 contribute to the GTP site. The interval N120 to D123 is G4. Residues I149–A151 form a G5 region. The 78-residue stretch at L201–E278 folds into the KH type-2 domain.

The protein belongs to the TRAFAC class TrmE-Era-EngA-EngB-Septin-like GTPase superfamily. Era GTPase family. Monomer.

Its subcellular location is the cytoplasm. It is found in the cell membrane. An essential GTPase that binds both GDP and GTP, with rapid nucleotide exchange. Plays a role in 16S rRNA processing and 30S ribosomal subunit biogenesis and possibly also in cell cycle regulation and energy metabolism. This Clostridium botulinum (strain Okra / Type B1) protein is GTPase Era.